A 309-amino-acid chain; its full sequence is Putative ankyrin repeat protein R603 (309 aa).

ANK repeat units follow at residues 53–82 (QVNG…MNPE), 83–112 (NKSQ…DVSL), 114–144 (DHFA…DVTS), 145–176 (NNNL…DIHA), 177–206 (DEYF…DVNM), 214–243 (NVLS…DISF), and 245–274 (DDND…DISF).

The chain is Putative ankyrin repeat protein R603 from Acanthamoeba polyphaga (Amoeba).